We begin with the raw amino-acid sequence, 302 residues long: MDRERLTHLQQLEAESIHIIREVAAEFENPVMMYSIGKDSSVMLHLARKAFYPGKIPFPLLHVDTDWKFKEMIKFRDETARKYGLDLIVHKNPDGLAMGINPFVHGSGKHTDIMKTEGLKQALNKYGFDAAFGGARRDEEKSRAKERVYSFRDKSHRWDPKNQRPELWRVYNSQVNKGESIRVFPLSNWTELDIWQYIYLENIDIVPLYFAAMRPVVERNGIKIMVDDERMPIGPEDEVKQELVRFRTLGCYPLTGAIESAATTLPEIIEEMLLTTSSERQGRLIDHDQAGSMEQKKRQGYF.

It belongs to the PAPS reductase family. CysD subfamily. In terms of assembly, heterodimer composed of CysD, the smaller subunit, and CysN.

It carries out the reaction sulfate + ATP + H(+) = adenosine 5'-phosphosulfate + diphosphate. It participates in sulfur metabolism; hydrogen sulfide biosynthesis; sulfite from sulfate: step 1/3. Its function is as follows. With CysN forms the ATP sulfurylase (ATPS) that catalyzes the adenylation of sulfate producing adenosine 5'-phosphosulfate (APS) and diphosphate, the first enzymatic step in sulfur assimilation pathway. APS synthesis involves the formation of a high-energy phosphoric-sulfuric acid anhydride bond driven by GTP hydrolysis by CysN coupled to ATP hydrolysis by CysD. In Aeromonas hydrophila subsp. hydrophila (strain ATCC 7966 / DSM 30187 / BCRC 13018 / CCUG 14551 / JCM 1027 / KCTC 2358 / NCIMB 9240 / NCTC 8049), this protein is Sulfate adenylyltransferase subunit 2.